The chain runs to 86 residues: Alpha-toxin TbTx5 (86 aa).

An N-terminal signal peptide occupies residues 1–19; sequence MNDFVFLVVACLLTAGTEG. Residues 21–82 enclose the LCN-type CS-alpha/beta domain; it reads KDGYPVEGDN…EPTKTNGRCK (62 aa). 4 cysteine pairs are disulfide-bonded: Cys-31-Cys-81, Cys-35-Cys-57, Cys-43-Cys-64, and Cys-47-Cys-66. Pro-83 bears the Proline amide mark.

The protein belongs to the long (4 C-C) scorpion toxin superfamily. Sodium channel inhibitor family. Alpha subfamily. As to expression, expressed by the venom gland.

Its subcellular location is the secreted. Alpha toxins bind voltage-independently at site-3 of sodium channels (Nav) and inhibit the inactivation of the activated channels, thereby blocking neuronal transmission. In Tityus bahiensis (Brazilian scorpion), this protein is Alpha-toxin TbTx5.